The primary structure comprises 175 residues: ATP synthase subunit delta (175 aa).

Belongs to the ATPase delta chain family. F-type ATPases have 2 components, F(1) - the catalytic core - and F(0) - the membrane proton channel. F(1) has five subunits: alpha(3), beta(3), gamma(1), delta(1), epsilon(1). F(0) has three main subunits: a(1), b(2) and c(10-14). The alpha and beta chains form an alternating ring which encloses part of the gamma chain. F(1) is attached to F(0) by a central stalk formed by the gamma and epsilon chains, while a peripheral stalk is formed by the delta and b chains.

The protein localises to the cell membrane. Functionally, f(1)F(0) ATP synthase produces ATP from ADP in the presence of a proton or sodium gradient. F-type ATPases consist of two structural domains, F(1) containing the extramembraneous catalytic core and F(0) containing the membrane proton channel, linked together by a central stalk and a peripheral stalk. During catalysis, ATP synthesis in the catalytic domain of F(1) is coupled via a rotary mechanism of the central stalk subunits to proton translocation. Its function is as follows. This protein is part of the stalk that links CF(0) to CF(1). It either transmits conformational changes from CF(0) to CF(1) or is implicated in proton conduction. In Brevibacillus brevis (strain 47 / JCM 6285 / NBRC 100599), this protein is ATP synthase subunit delta.